The primary structure comprises 412 residues: Putative gustatory receptor 58c (412 aa).

The next 2 helical transmembrane spans lie at 39–59 (VVYC…ALFV) and 72–92 (MFGV…LFLM). Asparagine 158 is a glycosylation site (N-linked (GlcNAc...) asparagine). The chain crosses the membrane as a helical span at residues 173 to 193 (IVYALIMILLMSYVDMTVYMV). N-linked (GlcNAc...) asparagine glycosylation occurs at asparagine 203. 3 consecutive transmembrane segments (helical) span residues 224–241 (IPRE…RKLW), 262–282 (VLFN…RLWI), and 296–316 (ILYA…FSIF). 3 N-linked (GlcNAc...) asparagine glycosylation sites follow: asparagine 337, asparagine 386, and asparagine 391.

It belongs to the insect chemoreceptor superfamily. Gustatory receptor (GR) family. Gr10a subfamily.

Its subcellular location is the cell membrane. Its function is as follows. Probable gustatory receptor which mediates acceptance or avoidance behavior, depending on its substrates. This Drosophila melanogaster (Fruit fly) protein is Putative gustatory receptor 58c (Gr58c).